The sequence spans 314 residues: Three-prime repair exonuclease 1 (314 aa).

2 residues coordinate Mg(2+): Asp-18 and Glu-20. 20 to 21 (EA) is a binding site for substrate. A Phosphoserine modification is found at Ser-78. Tyr-129 contacts substrate. Ser-167 carries the phosphoserine modification. His-195 acts as the Proton donor/acceptor in catalysis. Asp-200 provides a ligand contact to Mg(2+). A substrate-binding site is contributed by Asp-200. The segment at 236–314 (TASARTKPRP…YGLSLATPGE (79 aa)) is necessary for endoplasmic reticulum localization. The tract at residues 240–278 (RTKPRPSAVTTTAHLATTRNTSPSLGESRGTKDLPPVKD) is disordered. The interval 243–314 (PRPSAVTTTA…YGLSLATPGE (72 aa)) is interaction with UBQLN1. A compositionally biased stretch (low complexity) spans 247 to 260 (AVTTTAHLATTRNT). At Ser-261 the chain carries Phosphoserine. The interval 281–314 (ALSREGLLAPLGLLAILTLAVATLYGLSLATPGE) is necessary for cytoplasmic retention.

Belongs to the exonuclease superfamily. TREX family. As to quaternary structure, homodimer. Interacts (via proline-rich region) with TCERG1/CA150 (via the second WW domain). Component of the SET complex, composed of at least ANP32A, APEX1, HMGB2, NME1, SET and TREX1. Within this complex, directly interacts with SET; this interaction does not result in TREX1 inhibition. Also interacts with NME1, but only following translocation to the nucleus. Directly interacts with UBQLN1 (via ubiquitin-like domain); the interaction may control TREX1 subcellular location. Requires Mg(2+) as cofactor. Post-translationally, ubiquitinated, but not targeted to proteasomal degradation. Ubiquitination may be important for interaction with UBQLN1. In terms of tissue distribution, detected in thymus, spleen, liver, brain, heart, small intestine and colon.

The protein localises to the nucleus. It localises to the cytoplasm. It is found in the cytosol. Its subcellular location is the endoplasmic reticulum membrane. The enzyme catalyses Exonucleolytic cleavage in the 3'- to 5'-direction to yield nucleoside 5'-phosphates.. Functionally, major cellular 3'-to-5' DNA exonuclease which digests single-stranded DNA (ssDNA) and double-stranded DNA (dsDNA) with mismatched 3' termini. Prevents cell-intrinsic initiation of autoimmunity. Acts by metabolizing DNA fragments from endogenous retroelements, including L1, LTR and SINE elements. Plays a key role in degradation of DNA fragments at cytosolic micronuclei arising from genome instability: its association with the endoplasmic reticulum membrane directs TREX1 to ruptured micronuclei, leading to micronuclear DNA degradation. Micronuclear DNA degradation is required to limit CGAS activation and subsequent inflammation. Unless degraded, these DNA fragments accumulate in the cytosol and activate the cGAS-STING innate immune signaling, leading to the production of type I interferon. Prevents chronic ATM-dependent checkpoint activation, by processing ssDNA polynucleotide species arising from the processing of aberrant DNA replication intermediates. Inefficiently degrades oxidized DNA, such as that generated upon antimicrobial reactive oxygen production or upon absorption of UV light. During GZMA-mediated cell death, contributes to DNA damage in concert with NME1. NME1 nicks one strand of DNA and TREX1 removes bases from the free 3' end to enhance DNA damage and prevent DNA end reannealing and rapid repair. This is Three-prime repair exonuclease 1 from Homo sapiens (Human).